A 163-amino-acid polypeptide reads, in one-letter code: Nucleotide-binding protein cbdbA1256 (163 aa).

It belongs to the YajQ family.

In terms of biological role, nucleotide-binding protein. The sequence is that of Nucleotide-binding protein cbdbA1256 from Dehalococcoides mccartyi (strain CBDB1).